The sequence spans 154 residues: Fibroblast growth factor 2 (154 aa).

The propeptide occupies 1–9 (MAAGSITSL). Residues 1 to 20 (MAAGSITSLPALPEDGGGAF) are disordered. N35 is a binding site for heparin. A Phosphotyrosine; by TEC modification is found at Y81. A Glycyl lysine isopeptide (Lys-Gly) (interchain with G-Cter in SUMO1) cross-link involves residue K94. The segment at 127-143 (KRTGQYKLGSKTGPGQK) is heparin-binding.

Belongs to the heparin-binding growth factors family. As to quaternary structure, monomer. Homodimer. Interacts with FGFR1, FGFR2, FGFR3 and FGFR4. Affinity between fibroblast growth factors (FGFs) and their receptors is increased by heparan sulfate glycosaminoglycans that function as coreceptors. Interacts with CSPG4, FGFBP1 and TEC. Found in a complex with FGFBP1, FGF1 and FGF2. Interacts with FGFBP3. Interacts with integrin ITGAV:ITGB3; the interaction is required for FGF2 signaling. Interacts with SNORC (via the extracellular domain). Interacts with GPC3. Phosphorylation at Tyr-81 regulates FGF2 unconventional secretion. In terms of tissue distribution, found in all tissues examined.

Its subcellular location is the secreted. It localises to the nucleus. Functionally, acts as a ligand for FGFR1, FGFR2, FGFR3 and FGFR4. Also acts as an integrin ligand which is required for FGF2 signaling. Binds to integrin ITGAV:ITGB3. Plays an important role in the regulation of cell survival, cell division, cell differentiation and cell migration. Functions as a potent mitogen in vitro. Can induce angiogenesis. Mediates phosphorylation of ERK1/2 and thereby promotes retinal lens fiber differentiation. The sequence is that of Fibroblast growth factor 2 (Fgf2) from Rattus norvegicus (Rat).